The sequence spans 759 residues: Glycerol-3-phosphate O-acyltransferase 1 (759 aa).

Residues 1–48 are Lumenal-facing; the sequence is MPAPKLTEKFASSKSTQKTTNYSSIEAKSVKTSADQAYIYQEPSATKK. Residues 49–69 form a helical membrane-spanning segment; that stretch reads ILYSIATWLLYNIFHCFFREI. The Cytoplasmic portion of the chain corresponds to 70–434; sequence RGRGSFKVPQ…AKVNFAKNLG (365 aa). The HXXXXD motif signature appears at 414–419; the sequence is HYNLPD. Residues 435-449 traverse the membrane as a helical segment; it reads LVFFRSIGLCILFSL. A450 is a topological domain (lumenal). The chain crosses the membrane as a helical span at residues 451–465; sequence MPGIIMFSPVFILAK. Residues 466–493 lie on the Cytoplasmic side of the membrane; the sequence is RISQEKARTALSKSTVKIKANDVIATWK. Residues 494-514 traverse the membrane as a helical segment; the sequence is ILIGMGFAPLLYIFWSVLITY. The Lumenal portion of the chain corresponds to 515–523; sequence YLRHKPWNK. Residues 524–544 form a helical membrane-spanning segment; it reads IYVFSGSYISCVIVTYSALIV. Residues 545–759 are Cytoplasmic-facing; it reads GDIGMDGFKS…EEEEGKEGDA (215 aa). 3 disordered regions span residues 613–667, 684–705, and 729–759; these read EEDR…SLVN, RKSESSLASTSVAPSSSSEFEV, and IGENTAREEEEEEEEEEEEEEEEEEGKEGDA. Basic and acidic residues predominate over residues 647–659; the sequence is RDNHDAYEHHNQD. Residues 688–702 are compositionally biased toward low complexity; the sequence is SSLASTSVAPSSSSE. Acidic residues predominate over residues 736–759; the sequence is EEEEEEEEEEEEEEEEEEGKEGDA.

Belongs to the GPAT/DAPAT family.

Its subcellular location is the endoplasmic reticulum membrane. The enzyme catalyses sn-glycerol 3-phosphate + an acyl-CoA = a 1-acyl-sn-glycero-3-phosphate + CoA. It carries out the reaction dihydroxyacetone phosphate + an acyl-CoA = a 1-acylglycerone 3-phosphate + CoA. The catalysed reaction is sn-glycerol 3-phosphate + hexadecanoyl-CoA = 1-hexadecanoyl-sn-glycero-3-phosphate + CoA. It catalyses the reaction (9Z)-hexadecenoyl-CoA + sn-glycerol 3-phosphate = 1-(9Z-hexadecenoyl)-sn-glycero-3-phosphate + CoA. The enzyme catalyses sn-glycerol 3-phosphate + octadecanoyl-CoA = 1-octadecanoyl-sn-glycero-3-phosphate + CoA. It carries out the reaction sn-glycerol 3-phosphate + (9Z)-octadecenoyl-CoA = 1-(9Z-octadecenoyl)-sn-glycero-3-phosphate + CoA. It functions in the pathway phospholipid metabolism; CDP-diacylglycerol biosynthesis; CDP-diacylglycerol from sn-glycerol 3-phosphate: step 1/3. In terms of biological role, dual substrate-specific glycerol-3-phosphate/dihydroxyacetone phosphate sn-1 acyltransferase, catalyzing the first and committed reaction in the de novo synthesis of glycerophospholipids and triacylglycerols (TAGs). Prefers Gly-3-P over dihydroxyacetone phosphate and has a marked preference for 16-carbon fatty acyl chains. Transfers a fatty acid from fatty acyl-CoA to the sn-1 position of glycerol-3-phosphate to produce lysophosphatidic acid (LysoPA). These lipids not only are precursors of glycerolipids, but also are dynamic components of signal transduction systems that control cell physiology. SCT1 is the primary supplier of diacylglycerols (DAG), used mainly in TAG synthesis and phosphatidylcholine (PC) synthesis through the CDP-choline pathway. Regulates fatty acid desaturation, that is, the ratio of unsaturated versus saturated fatty acyl chains, by competing with the desaturase OLE1 for the common substrate C16:0-CoA. Sequesters C16:0-CoA into lipids, thereby shielding it from desaturation by OLE1. This is Glycerol-3-phosphate O-acyltransferase 1 from Saccharomyces cerevisiae (strain ATCC 204508 / S288c) (Baker's yeast).